The chain runs to 261 residues: Anamorsin homolog (261 aa).

The segment at 4-134 is N-terminal SAM-like domain; sequence VQENNQVLYI…EIGSAAKLSL (131 aa). A linker region spans residues 134-173; the sequence is LGGGANKAKVAAVWKLDVDDDGEAEERIDEDELLDEEDKV. The [2Fe-2S] cluster site is built by Cys-183, Cys-192, Cys-195, and Cys-197. Residues 183 to 197 form a fe-S binding site A region; the sequence is CGTTGKRKACKDCSC. Positions 222, 225, 233, and 236 each coordinate [4Fe-4S] cluster. Short sequence motifs (cx2C motif) lie at residues 222 to 225 and 233 to 236; these read CGSC and CATC. Residues 222–236 are fe-S binding site B; the sequence is CGSCYLGDAFRCATC.

This sequence belongs to the anamorsin family. In terms of assembly, monomer. It depends on [2Fe-2S] cluster as a cofactor. [4Fe-4S] cluster serves as cofactor.

It is found in the cytoplasm. Its subcellular location is the mitochondrion intermembrane space. Component of the cytosolic iron-sulfur (Fe-S) protein assembly (CIA) machinery. Required for the maturation of extramitochondrial Fe-S proteins. Part of an electron transfer chain functioning in an early step of cytosolic Fe-S biogenesis, facilitating the de novo assembly of a [4Fe-4S] cluster on the cytosolic Fe-S scaffold complex. Electrons are transferred from NADPH via a FAD- and FMN-containing diflavin oxidoreductase. Together with the diflavin oxidoreductase, also required for the assembly of the diferric tyrosyl radical cofactor of ribonucleotide reductase (RNR), probably by providing electrons for reduction during radical cofactor maturation in the catalytic small subunit. This chain is Anamorsin homolog, found in Culex quinquefasciatus (Southern house mosquito).